We begin with the raw amino-acid sequence, 315 residues long: ADP/ATP translocase 4 (315 aa).

Residues 1 to 19 (MHREPPKKKAEKRLFDASS) lie on the Mitochondrial intermembrane side of the membrane. A Solcar 1 repeat occupies 18 to 110 (SSFGKDLLAG…FAFKDKYKQL (93 aa)). Residues 20–49 (FGKDLLAGGVAAAVSKTAVAPIERVKLLLQ) form a helical membrane-spanning segment. Residues 50–86 (VQASSKQISPEARYKGMVDCLVRIPREQGFFSFWRGN) are Mitochondrial matrix-facing. Residues 87 to 111 (LANVIRYFPTQALNFAFKDKYKQLF) traverse the membrane as a helical segment. Positions 92 and 104 each coordinate ADP. Over 112 to 121 (MSGVNKEKQF) the chain is Mitochondrial intermembrane. A helical membrane pass occupies residues 122-142 (WRWFLANLASGGAAGATSLCV). Solcar repeat units follow at residues 123 to 213 (RWFL…VKGL) and 220 to 307 (TPFL…IKEF). Over 143-190 (VYPLDFARTRLGVDIGKGPEERQFKGLGDCIMKIAKSDGIAGLYQGFG) the chain is Mitochondrial matrix. Residues 191 to 211 (VSVQGIIVYRASYFGAYDTVK) traverse the membrane as a helical segment. Over 212–222 (GLLPKPKKTPF) the chain is Mitochondrial intermembrane. The helical transmembrane segment at 223-243 (LVSFFIAQVVTTCSGILSYPF) threads the bilayer. Residues 244 to 283 (DTVRRRMMMQSGEAKRQYKGTLDCFVKIYQHEGINSFFRG) lie on the Mitochondrial matrix side of the membrane. Arg247 lines the ADP pocket. Residues 247–252 (RRRMMM) form an important for transport activity region. The Nucleotide carrier signature motif motif lies at 247–252 (RRRMMM). The chain crosses the membrane as a helical span at residues 284-301 (AFSNVLRGTGGALVLVLY). The Mitochondrial intermembrane portion of the chain corresponds to 302-315 (DKIKEFFHIDIGGR).

It belongs to the mitochondrial carrier (TC 2.A.29) family. As to quaternary structure, monomer.

The protein resides in the mitochondrion inner membrane. It is found in the membrane. Its subcellular location is the cell projection. It localises to the cilium. The protein localises to the flagellum membrane. It carries out the reaction ADP(in) + ATP(out) = ADP(out) + ATP(in). The catalysed reaction is dATP(out) + ADP(in) = dATP(in) + ADP(out). It catalyses the reaction dADP(in) + ADP(out) = dADP(out) + ADP(in). The enzyme catalyses H(+)(in) = H(+)(out). The matrix-open state (m-state) is inhibited by the membrane-permeable bongkrekic acid (BKA). The cytoplasmic-open state (c-state) is inhibited by the membrane-impermeable toxic inhibitor carboxyatractyloside (CATR). Proton transporter activity is inhibited by ADP:ATP antiporter activity. ADP:ATP antiporter that mediates import of ADP into the mitochondrial matrix for ATP synthesis, and export of ATP out to fuel the cell. Cycles between the cytoplasmic-open state (c-state) and the matrix-open state (m-state): operates by the alternating access mechanism with a single substrate-binding site intermittently exposed to either the cytosolic (c-state) or matrix (m-state) side of the inner mitochondrial membrane. Specifically required during spermatogenesis, probably to mediate ADP:ATP exchange in spermatocytes. Large ATP supplies from mitochondria may be critical for normal progression of spermatogenesis during early stages of meiotic prophase I, including DNA double-strand break repair and chromosomal synapsis. In addition to its ADP:ATP antiporter activity, also involved in mitochondrial uncoupling and mitochondrial permeability transition pore (mPTP) activity. Plays a role in mitochondrial uncoupling by acting as a proton transporter: proton transport uncouples the proton flows via the electron transport chain and ATP synthase to reduce the efficiency of ATP production and cause mitochondrial thermogenesis. Proton transporter activity is inhibited by ADP:ATP antiporter activity, suggesting that SLC25A31/ANT4 acts as a master regulator of mitochondrial energy output by maintaining a delicate balance between ATP production (ADP:ATP antiporter activity) and thermogenesis (proton transporter activity). Proton transporter activity requires free fatty acids as cofactor, but does not transport it. Among nucleotides, may also exchange ADP for dATP and dADP. Also plays a key role in mPTP opening, a non-specific pore that enables free passage of the mitochondrial membranes to solutes of up to 1.5 kDa, and which contributes to cell death. It is however unclear if SLC25A31/ANT4 constitutes a pore-forming component of mPTP or regulates it. The sequence is that of ADP/ATP translocase 4 from Macaca fascicularis (Crab-eating macaque).